Consider the following 546-residue polypeptide: Protein FAM124A (546 aa).

Disordered regions lie at residues 1 to 37 (MDPK…SELS), 286 to 360 (FPKP…FQRS), and 488 to 546 (SSSS…EFYI). Residues 24–36 (SDYSHLSSTSSEL) show a composition bias toward low complexity. The span at 286 to 302 (FPKPGRVHHASEKKRHS) shows a compositional bias: basic residues. 2 stretches are compositionally biased toward polar residues: residues 304-324 (PLPS…SPLN) and 347-360 (ANST…FQRS). The span at 488–511 (SSSSATARAAPPAPSTSTLTDSSP) shows a compositional bias: low complexity.

Belongs to the FAM124 family.

In Homo sapiens (Human), this protein is Protein FAM124A (FAM124A).